A 552-amino-acid chain; its full sequence is Chaperonin GroEL (552 aa).

Residues 30 to 33, Lys51, 87 to 91, Gly415, 480 to 482, and Asp496 contribute to the ATP site; these read TLGP, DGTTT, and NAA.

This sequence belongs to the chaperonin (HSP60) family. As to quaternary structure, forms a cylinder of 14 subunits composed of two heptameric rings stacked back-to-back. Interacts with the co-chaperonin GroES.

It localises to the cytoplasm. The catalysed reaction is ATP + H2O + a folded polypeptide = ADP + phosphate + an unfolded polypeptide.. Together with its co-chaperonin GroES, plays an essential role in assisting protein folding. The GroEL-GroES system forms a nano-cage that allows encapsulation of the non-native substrate proteins and provides a physical environment optimized to promote and accelerate protein folding. In Coxiella burnetii (strain RSA 331 / Henzerling II), this protein is Chaperonin GroEL.